Reading from the N-terminus, the 486-residue chain is PTS system N-acetylmuramic acid-specific EIIBC component (486 aa).

Residues 1 to 89 enclose the PTS EIIB type-1 domain; sequence MAKITQTMIS…NKLIESVING (89 aa). Cys28 (phosphocysteine intermediate; for EIIB activity) is an active-site residue. The PTS EIIC type-1 domain maps to 127 to 486; it reads SKFATIFTPL…FFGSKDVDLS (360 aa). Helical transmembrane passes span 129 to 149, 170 to 190, 196 to 216, 230 to 250, 268 to 288, 312 to 332, 347 to 367, 381 to 401, 411 to 431, and 453 to 473; these read FATI…LLGF, LIAY…ILIG, AFGG…LGYN, FFGY…AAII, MILT…VVIM, AAIL…QGFV, LFPI…ALYF, GAII…VTLP, IGGA…LPVG, and IFAG…VGFL.

Its subcellular location is the cell inner membrane. It carries out the reaction N-acetyl-beta-D-muramate(out) + N(pros)-phospho-L-histidyl-[protein] = N-acetyl-beta-D-muramate 6-phosphate(in) + L-histidyl-[protein]. The phosphoenolpyruvate-dependent sugar phosphotransferase system (sugar PTS), a major carbohydrate active transport system, catalyzes the phosphorylation of incoming sugar substrates concomitantly with their translocation across the cell membrane. This system is involved in N-acetylmuramic acid (MurNAc) transport, yielding cytoplasmic MurNAc-6-P. Is also able to take up anhydro-N-acetylmuramic acid (anhMurNAc), but cannot phosphorylate the carbon 6, probably because of the 1,6-anhydro ring. This chain is PTS system N-acetylmuramic acid-specific EIIBC component (murP), found in Vibrio vulnificus (strain CMCP6).